The primary structure comprises 176 residues: ATP-dependent protease subunit HslV (176 aa).

Residue Thr-2 is part of the active site. 3 residues coordinate Na(+): Gly-157, Cys-160, and Thr-163.

It belongs to the peptidase T1B family. HslV subfamily. In terms of assembly, a double ring-shaped homohexamer of HslV is capped on each side by a ring-shaped HslU homohexamer. The assembly of the HslU/HslV complex is dependent on binding of ATP.

The protein resides in the cytoplasm. It carries out the reaction ATP-dependent cleavage of peptide bonds with broad specificity.. With respect to regulation, allosterically activated by HslU binding. Protease subunit of a proteasome-like degradation complex believed to be a general protein degrading machinery. This chain is ATP-dependent protease subunit HslV, found in Escherichia coli O139:H28 (strain E24377A / ETEC).